The chain runs to 396 residues: Phosphoglycerate kinase (396 aa).

Substrate-binding positions include 21–23 (DIN), arginine 36, 59–62 (HFGR), arginine 118, and arginine 151. ATP is bound by residues lysine 201, glutamate 323, and 353–356 (GGDT).

This sequence belongs to the phosphoglycerate kinase family. In terms of assembly, monomer.

The protein resides in the cytoplasm. It catalyses the reaction (2R)-3-phosphoglycerate + ATP = (2R)-3-phospho-glyceroyl phosphate + ADP. The protein operates within carbohydrate degradation; glycolysis; pyruvate from D-glyceraldehyde 3-phosphate: step 2/5. The protein is Phosphoglycerate kinase of Ruegeria sp. (strain TM1040) (Silicibacter sp.).